An 89-amino-acid polypeptide reads, in one-letter code: Putative septation protein SpoVG (89 aa).

Belongs to the SpoVG family.

In terms of biological role, could be involved in septation. In Heliobacterium modesticaldum (strain ATCC 51547 / Ice1), this protein is Putative septation protein SpoVG.